A 403-amino-acid polypeptide reads, in one-letter code: Na(+)-translocating NADH-quinone reductase subunit B (403 aa).

4 helical membrane passes run 56-76, 121-141, 164-184, and 195-212; these read MMILVWLCTFPAMFFGMWNTG, AYFLPIYAVTFIVGGFWEVLF, LPPSIPLWQVAMGISFGVVIG, and FLNPALVGRAFLFFAYPA. The residue at position 230 (Thr230) is an FMN phosphoryl threonine. 6 helical membrane-spanning segments follow: residues 237–257, 265–285, 287–307, 312–332, 348–368, and 371–391; these read AGGVEGVVSAGVSWMDAFLGI, TSTLAILIGGAVLLLTKIAAW, IVAGVMVGMVVLSSLFNLIGS, MFAMPWYWHLVAGGFAFGTLF, WAFGILIGVMVVLIRVVNPAF, and GMMLAILFGNLCAPLIDHFVV.

The protein belongs to the NqrB/RnfD family. As to quaternary structure, composed of six subunits; NqrA, NqrB, NqrC, NqrD, NqrE and NqrF. Requires FMN as cofactor.

Its subcellular location is the cell inner membrane. It catalyses the reaction a ubiquinone + n Na(+)(in) + NADH + H(+) = a ubiquinol + n Na(+)(out) + NAD(+). NQR complex catalyzes the reduction of ubiquinone-1 to ubiquinol by two successive reactions, coupled with the transport of Na(+) ions from the cytoplasm to the periplasm. NqrA to NqrE are probably involved in the second step, the conversion of ubisemiquinone to ubiquinol. This Azotobacter vinelandii (strain DJ / ATCC BAA-1303) protein is Na(+)-translocating NADH-quinone reductase subunit B.